We begin with the raw amino-acid sequence, 502 residues long: ATP synthase subunit alpha (502 aa).

Positions 115–135 are disordered; it reads VDGLGPINTTNTRPIESPAPG. 169 to 176 contacts ATP; the sequence is GDRQTGKT.

The protein belongs to the ATPase alpha/beta chains family. As to quaternary structure, F-type ATPases have 2 components, CF(1) - the catalytic core - and CF(0) - the membrane proton channel. CF(1) has five subunits: alpha(3), beta(3), gamma(1), delta(1), epsilon(1). CF(0) has three main subunits: a(1), b(2) and c(9-12). The alpha and beta chains form an alternating ring which encloses part of the gamma chain. CF(1) is attached to CF(0) by a central stalk formed by the gamma and epsilon chains, while a peripheral stalk is formed by the delta and b chains.

The protein resides in the cell membrane. It carries out the reaction ATP + H2O + 4 H(+)(in) = ADP + phosphate + 5 H(+)(out). Functionally, produces ATP from ADP in the presence of a proton gradient across the membrane. The alpha chain is a regulatory subunit. The sequence is that of ATP synthase subunit alpha from Bacillus anthracis (strain A0248).